A 643-amino-acid polypeptide reads, in one-letter code: 1-deoxy-D-xylulose-5-phosphate synthase (643 aa).

Thiamine diphosphate-binding positions include H72 and 113-115 (GHA). A Mg(2+)-binding site is contributed by D144. Thiamine diphosphate contacts are provided by residues 145-146 (GA), N174, Y287, and E370. N174 is a Mg(2+) binding site.

This sequence belongs to the transketolase family. DXPS subfamily. In terms of assembly, homodimer. The cofactor is Mg(2+). Thiamine diphosphate serves as cofactor.

It catalyses the reaction D-glyceraldehyde 3-phosphate + pyruvate + H(+) = 1-deoxy-D-xylulose 5-phosphate + CO2. Its pathway is metabolic intermediate biosynthesis; 1-deoxy-D-xylulose 5-phosphate biosynthesis; 1-deoxy-D-xylulose 5-phosphate from D-glyceraldehyde 3-phosphate and pyruvate: step 1/1. In terms of biological role, catalyzes the acyloin condensation reaction between C atoms 2 and 3 of pyruvate and glyceraldehyde 3-phosphate to yield 1-deoxy-D-xylulose-5-phosphate (DXP). The polypeptide is 1-deoxy-D-xylulose-5-phosphate synthase (Parasynechococcus marenigrum (strain WH8102)).